Here is a 323-residue protein sequence, read N- to C-terminus: Cyclin-H (323 aa).

Ser5 is modified (phosphoserine; by CDK8). Ser132 carries the post-translational modification Phosphoserine. Residues 299–323 (DDDYVPKKSKHEEEEWTDDDLVESL) form a disordered region. Positions 302–311 (YVPKKSKHEE) are enriched in basic and acidic residues. The span at 312–323 (EEWTDDDLVESL) shows a compositional bias: acidic residues. Thr315 is subject to Phosphothreonine. Ser322 carries the post-translational modification Phosphoserine.

It belongs to the cyclin family. Cyclin C subfamily. In terms of assembly, associates primarily with CDK7 and MAT1 to form the CAK complex. CAK can further associate with the core-TFIIH to form the TFIIH basal transcription factor.

It is found in the nucleus. Functionally, regulates CDK7, the catalytic subunit of the CDK-activating kinase (CAK) enzymatic complex. CAK activates the cyclin-associated kinases CDK1, CDK2, CDK4 and CDK6 by threonine phosphorylation. CAK complexed to the core-TFIIH basal transcription factor activates RNA polymerase II by serine phosphorylation of the repetitive C-terminal domain (CTD) of its large subunit (POLR2A), allowing its escape from the promoter and elongation of the transcripts. Involved in cell cycle control and in RNA transcription by RNA polymerase II. Its expression and activity are constant throughout the cell cycle. The sequence is that of Cyclin-H (CCNH) from Macaca fascicularis (Crab-eating macaque).